Here is a 268-residue protein sequence, read N- to C-terminus: Hydroxyethylthiazole kinase (268 aa).

Met45 serves as a coordination point for substrate. Residues Arg121 and Thr167 each contribute to the ATP site. Gly194 contacts substrate.

The protein belongs to the Thz kinase family. The cofactor is Mg(2+).

The catalysed reaction is 5-(2-hydroxyethyl)-4-methylthiazole + ATP = 4-methyl-5-(2-phosphooxyethyl)-thiazole + ADP + H(+). It participates in cofactor biosynthesis; thiamine diphosphate biosynthesis; 4-methyl-5-(2-phosphoethyl)-thiazole from 5-(2-hydroxyethyl)-4-methylthiazole: step 1/1. Functionally, catalyzes the phosphorylation of the hydroxyl group of 4-methyl-5-beta-hydroxyethylthiazole (THZ). The sequence is that of Hydroxyethylthiazole kinase from Bacillus anthracis (strain A0248).